The following is a 253-amino-acid chain: MATFAKVMLLLSSVATFGYTFFVVGKLMLFLSTPRSISKAHTWIFNLLDNKSRLETAYGPIVFDTLYLIGFIFQHSFLKSALVKNLWRKLGLAAAERTIYSLTSSICLHYLLKNWLPAQSIVLWQVDVDESAPLWWTFVVTHGLGWAVIFGGSLIMDLPELLGVKQVYYDLKEYGEPVAYKSSELRNLYSHVRHPSFVGLSVILFATNVMSLDRLLLASLLTVYMYVAWSTDDKDVAYQKQQLRNKKHELKAQ.

The Nuclear segment spans residues 1 to 2; it reads MA. The chain crosses the membrane as a helical span at residues 3-30; sequence TFAKVMLLLSSVATFGYTFFVVGKLMLF. Residues 31-56 lie on the Perinuclear space side of the membrane; sequence LSTPRSISKAHTWIFNLLDNKSRLET. The helical transmembrane segment at 57 to 78 threads the bilayer; sequence AYGPIVFDTLYLIGFIFQHSFL. The Nuclear portion of the chain corresponds to 79 to 96; it reads KSALVKNLWRKLGLAAAE. Residues 97–113 form a helical membrane-spanning segment; sequence RTIYSLTSSICLHYLLK. The Perinuclear space portion of the chain corresponds to 114–132; it reads NWLPAQSIVLWQVDVDESA. A helical transmembrane segment spans residues 133 to 161; sequence PLWWTFVVTHGLGWAVIFGGSLIMDLPEL. Residues 162 to 188 are Nuclear-facing; sequence LGVKQVYYDLKEYGEPVAYKSSELRNL. Residues 189–207 traverse the membrane as a helical segment; the sequence is YSHVRHPSFVGLSVILFAT. The Perinuclear space segment spans residues 208 to 213; the sequence is NVMSLD. The chain crosses the membrane as a helical span at residues 214–231; that stretch reads RLLLASLLTVYMYVAWST. Residues 232-253 are Nuclear-facing; the sequence is DDKDVAYQKQQLRNKKHELKAQ.

This sequence belongs to the nurim family.

The protein localises to the nucleus inner membrane. The sequence is that of Nurim homolog (nrm) from Drosophila pseudoobscura pseudoobscura (Fruit fly).